Here is a 79-residue protein sequence, read N- to C-terminus: Sulfur carrier protein TusA (79 aa).

Cysteine 17 acts as the Cysteine persulfide intermediate in catalysis.

This sequence belongs to the sulfur carrier protein TusA family.

It localises to the cytoplasm. In terms of biological role, sulfur carrier protein which probably makes part of a sulfur-relay system. This is Sulfur carrier protein TusA from Idiomarina loihiensis (strain ATCC BAA-735 / DSM 15497 / L2-TR).